The primary structure comprises 497 residues: Zinc finger CCCH domain-containing protein 22 (497 aa).

The C3H1-type zinc finger occupies 136–163 (SESMMICKFFMQQRCRFGSSCRSSHGLD). Residues 236 to 281 (AQMTDDDGEEEEEEDEQQSASDSEDSVSSDYDEGSPQGIGFLESTN) are disordered. A compositionally biased stretch (acidic residues) spans 239-268 (TDDDGEEEEEEDEQQSASDSEDSVSSDYDE). Positions 300–346 (TRGIASKMMASMGYREGMGLGVSGQGILNPILVKVLPAKRSLDYALE) constitute a G-patch domain. The segment at 352-387 (ECKSEKQKKKRSRGGKRKRGKKFAEAAKAAKQEEES) is disordered. Residues 357 to 372 (KQKKKRSRGGKRKRGK) show a composition bias toward basic residues. A compositionally biased stretch (basic and acidic residues) spans 373–387 (KFAEAAKAAKQEEES).

In Arabidopsis thaliana (Mouse-ear cress), this protein is Zinc finger CCCH domain-containing protein 22.